A 730-amino-acid chain; its full sequence is Guanyl-specific ribonuclease pgl-1 (730 aa).

The involved in dimerization stretch occupies residues 205–447 (KQLMLDGPKS…VTRIVESLEK (243 aa)). His437 functions as the Proton acceptor in the catalytic mechanism. 2 stretches are compositionally biased toward polar residues: residues 452–472 (DTPS…QDSA) and 568–595 (DANQ…SPTK). Disordered regions lie at residues 452 to 475 (DTPS…AYTK), 567 to 639 (SDAN…TPMP), and 686 to 730 (GGRG…RGGF). The RNA-binding RGG-box stretch occupies residues 674-730 (GGGRGGYGGGDRGGRGGYGGDRGGRGGYGGGDRGGRGGYGGDRGRGGYGGRGGRGGF).

Homodimer. Interacts with pgl-2 and pgl-3; this association is not required for P-granule localization of either pgl-2 or pgl-3. Interacts with ife-1. Interacts with prmt-1; the interaction is direct. Interacts with nmad-1. Interacts with P granule components meg-1, meg-3 and meg-4. It depends on Does not require metal ions for catalytic activity. as a cofactor. Methylated at arginine residues in the RNA-binding RGG-box by prmt-1. Methylation promotes P-granule degradation by autophagy. Expressed in the germline. Expressed in most somatic cells.

The protein resides in the cytoplasmic granule. The enzyme catalyses [RNA] containing guanosine + H2O = an [RNA fragment]-3'-guanosine-3'-phosphate + a 5'-hydroxy-ribonucleotide-3'-[RNA fragment].. Not inhibited by RNase inhibitor RNasin. Functionally, guanyl-specific endoribonuclease which cleaves the phosphodiester bond in single-stranded RNA between the 3'-guanylic residue and the 5'-OH residue of adjacent nucleotide, resulting in the formation of a corresponding 2',3'-cyclic phosphate intermediate. Together with the P-granule component pgl-3, is involved in the formation of P-granules. Together with pgl-3, probably recruits other granule components such as pos-1, mex-3 and glh-1 to P-granules. In addition, may act redundantly with pgl-3 to protect germ cells from excessive germline apoptosis during normal oogenesis and development of the two gonadal arms. This may in part be through regulating the localization of sir-2.1 which is involved in germ cell apoptosis. May protect somatic cells from excessive apoptosis during normal development. Essential role in male and female postembryonic germline development; maternally provided protein maintains a population of proliferating germ cells and zygotic expression is required for correct oogenesis. The sequence is that of Guanyl-specific ribonuclease pgl-1 from Caenorhabditis elegans.